The primary structure comprises 664 residues: Bifunctional 3-dehydroquinate synthase/phosphatase (664 aa).

Residues 1–352 are 3-dehydroquinate synthase; that stretch reads MKKIFDDIYV…KIIDKYKNNF (352 aa). NAD(+) contacts are provided by residues 61–66, 95–99, 119–120, Lys132, Lys141, and 159–162; these read DGEEYK, GVICD, TS, and FLKT. 3 residues coordinate Zn(2+): Glu174, His238, and His255. The tract at residues 353-664 is GPPA/PPX; sequence LRASIDIGTN…GAILEGVENK (312 aa).

This sequence in the N-terminal section; belongs to the sugar phosphate cyclases superfamily. Dehydroquinate synthase family. In the C-terminal section; belongs to the GppA/Ppx family. In terms of assembly, monomer. It depends on NAD(+) as a cofactor. Requires Co(2+) as cofactor. Zn(2+) serves as cofactor.

It is found in the cytoplasm. It catalyses the reaction 7-phospho-2-dehydro-3-deoxy-D-arabino-heptonate = 3-dehydroquinate + phosphate. It participates in metabolic intermediate biosynthesis; chorismate biosynthesis; chorismate from D-erythrose 4-phosphate and phosphoenolpyruvate: step 2/7. The sequence is that of Bifunctional 3-dehydroquinate synthase/phosphatase (aroB) from Fusobacterium nucleatum subsp. nucleatum (strain ATCC 25586 / DSM 15643 / BCRC 10681 / CIP 101130 / JCM 8532 / KCTC 2640 / LMG 13131 / VPI 4355).